The primary structure comprises 309 residues: Interferon-inducible double-stranded RNA-dependent protein kinase activator A homolog A (309 aa).

Residues 1 to 22 (MSQERFPAAPKMSSEKPTSLDA) form a disordered region. 3 DRBM domains span residues 31-98 (TPIQ…ILRG), 123-191 (NPVG…KFKT), and 236-304 (DYVK…YLKI).

It belongs to the PRKRA family. Homodimer. Interacts with dicer1 and eif2ak2/pkr. Also able to interact with dsRNA.

It is found in the cytoplasm. The protein localises to the perinuclear region. The protein resides in the nucleus. Its function is as follows. Activates eif2ak2/pkr in the absence of double-stranded RNA (dsRNA), leading to phosphorylation of eif2s1/efi2-alpha and inhibition of translation and induction of apoptosis. Required for siRNA production by dicer1 and for subsequent siRNA-mediated post-transcriptional gene silencing. Does not seem to be required for processing of pre-miRNA to miRNA by dicer1. The protein is Interferon-inducible double-stranded RNA-dependent protein kinase activator A homolog A (prkra-a) of Xenopus laevis (African clawed frog).